Reading from the N-terminus, the 444-residue chain is Flagellum-specific ATP synthase (444 aa).

164–171 (AGSGVGKS) contacts ATP.

It belongs to the ATPase alpha/beta chains family.

Its subcellular location is the cytoplasm. It carries out the reaction ATP + H2O + 4 H(+)(in) = ADP + phosphate + 5 H(+)(out). In terms of biological role, probable catalytic subunit of a protein translocase for flagellum-specific export, or a proton translocase involved in local circuits at the flagellum. The protein is Flagellum-specific ATP synthase (fliI) of Caulobacter vibrioides (strain ATCC 19089 / CIP 103742 / CB 15) (Caulobacter crescentus).